Here is a 101-residue protein sequence, read N- to C-terminus: Small ribosomal subunit protein uS14 (101 aa).

The protein belongs to the universal ribosomal protein uS14 family. In terms of assembly, part of the 30S ribosomal subunit. Contacts proteins S3 and S10.

In terms of biological role, binds 16S rRNA, required for the assembly of 30S particles and may also be responsible for determining the conformation of the 16S rRNA at the A site. The sequence is that of Small ribosomal subunit protein uS14 from Burkholderia ambifaria (strain MC40-6).